The following is a 148-amino-acid chain: Aspartate carbamoyltransferase regulatory chain (148 aa).

Residues C106, C111, C134, and C137 each contribute to the Zn(2+) site.

It belongs to the PyrI family. As to quaternary structure, contains catalytic and regulatory chains. Requires Zn(2+) as cofactor.

Involved in allosteric regulation of aspartate carbamoyltransferase. The sequence is that of Aspartate carbamoyltransferase regulatory chain from Methanococcus vannielii (strain ATCC 35089 / DSM 1224 / JCM 13029 / OCM 148 / SB).